Reading from the N-terminus, the 157-residue chain is Phosphopantetheine adenylyltransferase (157 aa).

Threonine 10 contributes to the substrate binding site. ATP-binding positions include 10-11 and histidine 18; that span reads TF. Substrate contacts are provided by lysine 42, leucine 74, and arginine 88. ATP-binding positions include 89-91, glutamate 99, and 124-130; these read GLR and NAFISSS.

It belongs to the bacterial CoaD family. As to quaternary structure, homohexamer. Mg(2+) is required as a cofactor.

It localises to the cytoplasm. The enzyme catalyses (R)-4'-phosphopantetheine + ATP + H(+) = 3'-dephospho-CoA + diphosphate. Its pathway is cofactor biosynthesis; coenzyme A biosynthesis; CoA from (R)-pantothenate: step 4/5. In terms of biological role, reversibly transfers an adenylyl group from ATP to 4'-phosphopantetheine, yielding dephospho-CoA (dPCoA) and pyrophosphate. This chain is Phosphopantetheine adenylyltransferase, found in Helicobacter acinonychis (strain Sheeba).